The following is an 832-amino-acid chain: Cadherin-like protein 26 (832 aa).

A signal peptide spans 1 to 27; the sequence is MAMRSGRHPSLLLLLVLLLWLLQVSII. Over 28-614 the chain is Extracellular; it reads DSVQQETDDL…ELADAEVGLH (587 aa). 4 consecutive Cadherin domains span residues 35 to 165, 166 to 275, 276 to 396, and 397 to 500; these read DDLT…APQF, PEKE…RPAF, TQEN…PPAF, and HPQS…VPTL. 4 N-linked (GlcNAc...) asparagine glycosylation sites follow: Asn81, Asn85, Asn171, and Asn177. N-linked (GlcNAc...) asparagine glycosylation is present at Asn462. A helical membrane pass occupies residues 615–635; that stretch reads VGALFPVCAAFVALAVALLFL. Over 636–832 the chain is Cytoplasmic; the sequence is LRCYFVLEPK…EIYSESGVPS (197 aa). The disordered stretch occupies residues 813-832; the sequence is SLGSKATPFEEIYSESGVPS.

As to quaternary structure, homodimer. Component of a cadherin:catenin adhesion complex composed of at least of CDH26, beta-catenin/CTNNB1, alpha-catenin/CTNNA1 and p120 catenin/CTNND1. In terms of processing, N-glycosylated. In terms of tissue distribution, expressed by epithelial cells of gastrointestinal tissue.

Its subcellular location is the cell membrane. Functionally, cadherins are calcium-dependent cell adhesion proteins. They preferentially interact with themselves in a homophilic manner in connecting cells; cadherins may thus contribute to the sorting of heterogeneous cell types. Ligand for integrins alpha-E/beta-7, ITGAE:ITGAB7, alpha-4/beta-7, ITGA4:ITGAB7 and alpha-4/beta-1, ITGA4:ITGAB1 through which modulates CD4(+) T cells activation. This chain is Cadherin-like protein 26 (CDH26), found in Homo sapiens (Human).